A 432-amino-acid chain; its full sequence is Glutamate-1-semialdehyde 2,1-aminomutase (432 aa).

Lys-265 carries the post-translational modification N6-(pyridoxal phosphate)lysine.

Belongs to the class-III pyridoxal-phosphate-dependent aminotransferase family. HemL subfamily. Homodimer. The cofactor is pyridoxal 5'-phosphate.

The protein localises to the cytoplasm. The catalysed reaction is (S)-4-amino-5-oxopentanoate = 5-aminolevulinate. It participates in porphyrin-containing compound metabolism; protoporphyrin-IX biosynthesis; 5-aminolevulinate from L-glutamyl-tRNA(Glu): step 2/2. This is Glutamate-1-semialdehyde 2,1-aminomutase from Photobacterium profundum (strain SS9).